The primary structure comprises 276 residues: 2-dehydro-3-deoxyphosphooctonate aldolase (276 aa).

Belongs to the KdsA family.

The protein resides in the cytoplasm. It carries out the reaction D-arabinose 5-phosphate + phosphoenolpyruvate + H2O = 3-deoxy-alpha-D-manno-2-octulosonate-8-phosphate + phosphate. It participates in carbohydrate biosynthesis; 3-deoxy-D-manno-octulosonate biosynthesis; 3-deoxy-D-manno-octulosonate from D-ribulose 5-phosphate: step 2/3. It functions in the pathway bacterial outer membrane biogenesis; lipopolysaccharide biosynthesis. In Helicobacter acinonychis (strain Sheeba), this protein is 2-dehydro-3-deoxyphosphooctonate aldolase.